A 1466-amino-acid chain; its full sequence is Immediate-early protein 2 (1466 aa).

Disordered stretches follow at residues 1 to 21, 223 to 242, 339 to 370, 428 to 472, 517 to 965, 1005 to 1068, 1086 to 1179, and 1191 to 1223; these read MEPA…MQDY, NRGY…GGNG, YNHP…RGNQ, RCRS…VTKA, RSKT…TSIN, FRPH…CRSN, SRTR…SENA, and TTSH…DSSI. Residues 339–350 show a composition bias toward polar residues; that stretch reads YNHPTKAQTIPE. Residues 428-437 show a composition bias toward basic residues; it reads RCRSVQKKKE. 2 stretches are compositionally biased toward basic and acidic residues: residues 443-472 and 536-553; these read NKHD…VTKA and PTKD…DNYP. 2 stretches are compositionally biased toward polar residues: residues 583-595 and 640-665; these read KNVS…TSPK and KNHT…PTAF. The segment covering 666-681 has biased composition (low complexity); sequence NKSNNNKSITNSTSNS. The span at 696 to 713 shows a compositional bias: basic and acidic residues; that stretch reads NESKDPNRTCGKNSDKHL. 2 stretches are compositionally biased toward low complexity: residues 720–756 and 763–772; these read ASKR…SSRA and RASSRAPSRA. Basic and acidic residues predominate over residues 773-790; the sequence is SSRDSSRASSRDSSRDSN. The span at 791-800 shows a compositional bias: low complexity; it reads RASSKASSRA. The span at 801–814 shows a compositional bias: basic and acidic residues; it reads SSRDSSRASSRDSS. Composition is skewed to low complexity over residues 826–884 and 926–940; these read SRAS…SSRA. The segment covering 955–965 has biased composition (polar residues); that stretch reads RQTPPHDTSIN. Residues 989–1037 form an interaction with human UBE2I region; sequence ARLQCFNHNDQFYNPRFRPHIRTNRKKSESTNDTDSESSMSRCKSHCRN. 3 stretches are compositionally biased toward low complexity: residues 1019–1029, 1053–1068, and 1086–1110; these read TNDTDSESSMS, GSSS…CRSN, and SRTR…STLK. A compositionally biased stretch (basic and acidic residues) spans 1116-1131; it reads QNRDNKQIKSKSDSKH. Residues 1162–1177 are compositionally biased toward polar residues; sequence HNSSPFNTHEQSNHSE. Residues 1195 to 1213 are compositionally biased toward basic residues; sequence LHQKQNVKLHNTKKCKKKR.

Belongs to the herpesviridae IE2 family. As to quaternary structure, interacts with human UBE2I in the nucleus. Although this interaction does not promote IE2 sumoylation, it represses transactivation activity.

The protein resides in the host nucleus. Transcriptional transactivator. In Homo sapiens (Human), this protein is Immediate-early protein 2 (U90/U86).